Reading from the N-terminus, the 223-residue chain is Probable transaldolase (223 aa).

The Schiff-base intermediate with substrate role is filled by lysine 91.

It belongs to the transaldolase family. Type 3B subfamily.

The protein resides in the cytoplasm. It carries out the reaction D-sedoheptulose 7-phosphate + D-glyceraldehyde 3-phosphate = D-erythrose 4-phosphate + beta-D-fructose 6-phosphate. It participates in carbohydrate degradation; pentose phosphate pathway; D-glyceraldehyde 3-phosphate and beta-D-fructose 6-phosphate from D-ribose 5-phosphate and D-xylulose 5-phosphate (non-oxidative stage): step 2/3. Its function is as follows. Transaldolase is important for the balance of metabolites in the pentose-phosphate pathway. This is Probable transaldolase from Chlorobium phaeobacteroides (strain BS1).